The sequence spans 205 residues: Small ribosomal subunit protein uS4 (205 aa).

Residues 1–16 (MSKRESSKYKIDRRMG) are compositionally biased toward basic and acidic residues. The interval 1 to 46 (MSKRESSKYKIDRRMGENIWGRPKSPVNRREYGPGQHGQRRKGKLS) is disordered. Residues 94–157 (SRLDAIVYRA…KQLVIVLEAV (64 aa)) enclose the S4 RNA-binding domain.

Belongs to the universal ribosomal protein uS4 family. In terms of assembly, part of the 30S ribosomal subunit. Contacts protein S5. The interaction surface between S4 and S5 is involved in control of translational fidelity.

Functionally, one of the primary rRNA binding proteins, it binds directly to 16S rRNA where it nucleates assembly of the body of the 30S subunit. With S5 and S12 plays an important role in translational accuracy. This chain is Small ribosomal subunit protein uS4, found in Rhizobium johnstonii (strain DSM 114642 / LMG 32736 / 3841) (Rhizobium leguminosarum bv. viciae).